The sequence spans 486 residues: Alpha-L-arabinofuranosidase B (486 aa).

Positions methionine 1–alanine 25 are cleaved as a signal peptide. An N-linked (GlcNAc...) asparagine glycan is attached at asparagine 42. Residues leucine 45–proline 342 are catalytic. The active-site Proton acceptor is aspartate 51. Glutamate 229 serves as the catalytic Proton donor. N-linked (GlcNAc...) asparagine glycosylation is found at asparagine 302, asparagine 416, and asparagine 426. The ABD stretch occupies residues serine 359–asparagine 467.

It belongs to the glycosyl hydrolase 43 family.

It is found in the secreted. The enzyme catalyses Hydrolysis of terminal non-reducing alpha-L-arabinofuranoside residues in alpha-L-arabinosides.. Its pathway is glycan metabolism; L-arabinan degradation. Functionally, secreted arabinofuranosidase that causes degradation of rice cell wall components during infection. Required for virulence. This chain is Alpha-L-arabinofuranosidase B, found in Pyricularia oryzae (strain 70-15 / ATCC MYA-4617 / FGSC 8958) (Rice blast fungus).